We begin with the raw amino-acid sequence, 492 residues long: Catalase isozyme 1 (492 aa).

Catalysis depends on residues His65 and Asn138. Tyr348 is a binding site for heme.

This sequence belongs to the catalase family. As to quaternary structure, homotetramer. It depends on heme as a cofactor. Scutella, milky endosperm of immature kernels, leaves and epicotyls.

Its subcellular location is the peroxisome. The enzyme catalyses 2 H2O2 = O2 + 2 H2O. Its function is as follows. Occurs in almost all aerobically respiring organisms and serves to protect cells from the toxic effects of hydrogen peroxide. In Zea mays (Maize), this protein is Catalase isozyme 1 (CAT1).